A 329-amino-acid polypeptide reads, in one-letter code: tRNA-modifying protein YgfZ (329 aa).

Residues W27 and W189 each coordinate folate.

Belongs to the tRNA-modifying YgfZ family.

It is found in the cytoplasm. Folate-binding protein involved in regulating the level of ATP-DnaA and in the modification of some tRNAs. It is probably a key factor in regulatory networks that act via tRNA modification, such as initiation of chromosomal replication. The polypeptide is tRNA-modifying protein YgfZ (Cronobacter sakazakii (strain ATCC BAA-894) (Enterobacter sakazakii)).